A 936-amino-acid chain; its full sequence is Protocadherin alpha-5 (936 aa).

The signal sequence occupies residues 1–28; sequence MVYSRRGSLGSRLLLLWLLLAYWKAGSG. Over 29-696 the chain is Extracellular; the sequence is QLHYSIPEEA…GPEAALVDVN (668 aa). Cadherin domains lie at 33 to 132, 156 to 241, 242 to 349, 350 to 454, 455 to 564, and 580 to 677; these read SIPE…PPRF, ASDL…APEF, DKSI…TPEM, AITT…APAF, AQPQ…APAL, and VPRS…APKA. N264 is a glycosylation site (N-linked (GlcNAc...) asparagine). N547 carries an N-linked (GlcNAc...) asparagine glycan. A helical transmembrane segment spans residues 697-717; sequence VYLIIAICAVSSLLVLTLLLY. Topologically, residues 718–936 are cytoplasmic; it reads TALRCSAQPT…GNSTTDNSDQ (219 aa). 2 disordered regions span residues 759-793 and 816-936; these read SGEA…PDWR and AGPG…NSDQ. PXXP repeat units follow at residues 773 to 776, 785 to 788, 818 to 821, 873 to 876, and 877 to 890; these read PSLP, PRQP, PGGP, KFII, and PGSP…QEPT. Residues 773–890 are 5 X 4 AA repeats of P-X-X-P; it reads PSLPQGPTST…AIISIRQEPT (118 aa). Residues 774–786 are compositionally biased toward polar residues; it reads SLPQGPTSTDNPR. Positions 895–909 are enriched in basic and acidic residues; the sequence is DKSDFITFGKKEETK.

Its subcellular location is the cell membrane. Potential calcium-dependent cell-adhesion protein. May be involved in the establishment and maintenance of specific neuronal connections in the brain. This chain is Protocadherin alpha-5 (PCDHA5), found in Homo sapiens (Human).